An 855-amino-acid chain; its full sequence is Glucans biosynthesis glucosyltransferase H (855 aa).

The next 6 helical transmembrane spans lie at 142–162 (ILLTLMIGQTLVAGWYMKGIL), 196–216 (ILVLFGILFCWVSAGFWTALM), 515–535 (VFLTGVMSYLSAPLWFLFLVL), 572–592 (LFSTTIVLLFLPKLLSVILIW), 606–626 (TLSMLLEMLFSMLLAPVRMIF), and 682–702 (FLWWLAPIVGSLVLSIPVSVI).

Belongs to the glycosyltransferase 2 family. OpgH subfamily.

It is found in the cell inner membrane. It functions in the pathway glycan metabolism; osmoregulated periplasmic glucan (OPG) biosynthesis. Functionally, involved in the biosynthesis of osmoregulated periplasmic glucans (OPGs). This is Glucans biosynthesis glucosyltransferase H from Pseudomonas entomophila (strain L48).